Here is a 333-residue protein sequence, read N- to C-terminus: Adenosine deaminase (333 aa).

The Zn(2+) site is built by His12 and His14. Residues His14, Asp16, and Gly170 each coordinate substrate. His197 contacts Zn(2+). Glu200 (proton donor) is an active-site residue. Position 278 (Asp278) interacts with Zn(2+). Asp279 is a binding site for substrate.

Belongs to the metallo-dependent hydrolases superfamily. Adenosine and AMP deaminases family. Adenosine deaminase subfamily. It depends on Zn(2+) as a cofactor.

It carries out the reaction adenosine + H2O + H(+) = inosine + NH4(+). The catalysed reaction is 2'-deoxyadenosine + H2O + H(+) = 2'-deoxyinosine + NH4(+). Catalyzes the hydrolytic deamination of adenosine and 2-deoxyadenosine. The chain is Adenosine deaminase from Shigella dysenteriae serotype 1 (strain Sd197).